Consider the following 146-residue polypeptide: Large ribosomal subunit protein uL11 (146 aa).

This sequence belongs to the universal ribosomal protein uL11 family. As to quaternary structure, part of the ribosomal stalk of the 50S ribosomal subunit. Interacts with L10 and the large rRNA to form the base of the stalk. L10 forms an elongated spine to which L12 dimers bind in a sequential fashion forming a multimeric L10(L12)X complex. In terms of processing, one or more lysine residues are methylated.

Forms part of the ribosomal stalk which helps the ribosome interact with GTP-bound translation factors. This is Large ribosomal subunit protein uL11 from Buchnera aphidicola subsp. Baizongia pistaciae (strain Bp).